The following is a 380-amino-acid chain: Cytochrome b (380 aa).

The next 4 membrane-spanning stretches (helical) occupy residues 34 to 54 (FGSL…LLAM), 78 to 99 (WLIR…YFHI), 114 to 134 (WNTG…GYVL), and 179 to 199 (FFAL…IHLT). Positions 84 and 98 each coordinate heme b. Heme b contacts are provided by histidine 183 and histidine 197. Residue histidine 202 coordinates a ubiquinone. The next 4 membrane-spanning stretches (helical) occupy residues 227–247 (LKDI…ALFS), 289–309 (LGGV…PFLH), 321–341 (ISQL…WVGS), and 348–368 (FIII…VLFP).

This sequence belongs to the cytochrome b family. The cytochrome bc1 complex contains 11 subunits: 3 respiratory subunits (MT-CYB, CYC1 and UQCRFS1), 2 core proteins (UQCRC1 and UQCRC2) and 6 low-molecular weight proteins (UQCRH/QCR6, UQCRB/QCR7, UQCRQ/QCR8, UQCR10/QCR9, UQCR11/QCR10 and a cleavage product of UQCRFS1). This cytochrome bc1 complex then forms a dimer. Requires heme b as cofactor.

It localises to the mitochondrion inner membrane. In terms of biological role, component of the ubiquinol-cytochrome c reductase complex (complex III or cytochrome b-c1 complex) that is part of the mitochondrial respiratory chain. The b-c1 complex mediates electron transfer from ubiquinol to cytochrome c. Contributes to the generation of a proton gradient across the mitochondrial membrane that is then used for ATP synthesis. The protein is Cytochrome b (MT-CYB) of Pachyptila salvini (Salvin's prion).